Here is a 505-residue protein sequence, read N- to C-terminus: Maturase K (505 aa).

Belongs to the intron maturase 2 family. MatK subfamily.

The protein resides in the plastid. Its subcellular location is the chloroplast. Its function is as follows. Usually encoded in the trnK tRNA gene intron. Probably assists in splicing its own and other chloroplast group II introns. The sequence is that of Maturase K from Sciadopitys verticillata (Japanese umbrella-pine).